Consider the following 1379-residue polypeptide: DNA-directed RNA polymerase subunit beta (1379 aa).

The protein belongs to the RNA polymerase beta chain family. In terms of assembly, the RNAP catalytic core consists of 2 alpha, 1 beta, 1 beta' and 1 omega subunit. When a sigma factor is associated with the core the holoenzyme is formed, which can initiate transcription.

It catalyses the reaction RNA(n) + a ribonucleoside 5'-triphosphate = RNA(n+1) + diphosphate. In terms of biological role, DNA-dependent RNA polymerase catalyzes the transcription of DNA into RNA using the four ribonucleoside triphosphates as substrates. This is DNA-directed RNA polymerase subunit beta from Allorhizobium ampelinum (strain ATCC BAA-846 / DSM 112012 / S4) (Agrobacterium vitis (strain S4)).